Consider the following 440-residue polypeptide: 5-hydroxytryptamine receptor 6 (440 aa).

Residues 1–27 (MVPEPGPTANSTPAWGAGPPSAPGGSG) lie on the Extracellular side of the membrane. A helical transmembrane segment spans residues 28 to 52 (WVAAALCVVIALTAAANSLLIALIC). Residues 53–62 (TQPALRNTSN) lie on the Cytoplasmic side of the membrane. The helical transmembrane segment at 63 to 88 (FFLVSLFTSDLMVGLVVMPPAMLNAL) threads the bilayer. The Extracellular segment spans residues 89–96 (YGRWVLAR). Residues 97–122 (GLCLLWTAFDVMCCSASILNLCLISL) form a helical membrane-spanning segment. A disulfide bridge connects residues Cys99 and Cys180. Serotonin is bound at residue Asp106. At 123-142 (DRYLLILSPLRYKLRMTPLR) the chain is on the cytoplasmic side. Residues 143 to 167 (ALALVLGAWSLAALASFLPLLLGWH) traverse the membrane as a helical segment. Residues 168–185 (ELGHARPPVPGQCRLLAS) lie on the Extracellular side of the membrane. Residues 186–209 (LPFVLVASGLTFFLPSGAICFTYC) form a helical membrane-spanning segment. The Cytoplasmic portion of the chain corresponds to 210 to 266 (RILLAARKQAVQVASLTTGMASQASETLQVPRTPRPGVESADSRRLATKHSRKALKA). The chain crosses the membrane as a helical span at residues 267-293 (SLTLGILLGMFFVTWLPFFVANIVQAV). Asn288 provides a ligand contact to serotonin. Residues 294 to 299 (CDCISP) lie on the Extracellular side of the membrane. The helical transmembrane segment at 300-323 (GLFDVLTWLGYCNSTMNPIIYPLF) threads the bilayer. The Cytoplasmic portion of the chain corresponds to 324-440 (MRDFKRALGR…RPHPLGIPTN (117 aa)). Residues 346–392 (ASLASPSLRTSHSGPRPGLSLQQVLPLPLPPDSDSDSDAGSGGSSGL) are disordered. The span at 347 to 358 (SLASPSLRTSHS) shows a compositional bias: polar residues. The span at 362–371 (PGLSLQQVLP) shows a compositional bias: low complexity.

This sequence belongs to the G-protein coupled receptor 1 family. Interacts with MTOR, RPTOR and NF1. Interacts with CDK5. As to expression, expressed in several human brain regions, most prominently in the caudate nucleus.

Its subcellular location is the cell membrane. Its function is as follows. G-protein coupled receptor for 5-hydroxytryptamine (serotonin), a biogenic hormone that functions as a neurotransmitter, a hormone and a mitogen. Also has a high affinity for tricyclic psychotropic drugs. Ligand binding causes a conformation change that triggers signaling via guanine nucleotide-binding proteins (G proteins) and modulates the activity of downstream effectors. HTR6 is coupled to G(s) G alpha proteins and mediates activation of adenylate cyclase activity. Controls pyramidal neurons migration during corticogenesis, through the regulation of CDK5 activity. Is an activator of mTOR signaling. This is 5-hydroxytryptamine receptor 6 from Homo sapiens (Human).